The chain runs to 105 residues: uncharacterized protein (105 aa).

Positions 1–11 (MPHRNDRRKSA) are enriched in basic residues. Residues 1–20 (MPHRNDRRKSASKAPNAIIH) are disordered.

It belongs to the ALB1 family.

Its subcellular location is the nucleus. It localises to the nucleolus. This is an uncharacterized protein from Schizosaccharomyces pombe (strain 972 / ATCC 24843) (Fission yeast).